The following is a 339-amino-acid chain: Uroporphyrinogen decarboxylase (339 aa).

Substrate is bound by residues 23-27, aspartate 72, tyrosine 147, threonine 202, and histidine 315; that span reads RQAGR.

This sequence belongs to the uroporphyrinogen decarboxylase family. As to quaternary structure, homodimer.

The protein resides in the cytoplasm. It catalyses the reaction uroporphyrinogen III + 4 H(+) = coproporphyrinogen III + 4 CO2. It functions in the pathway porphyrin-containing compound metabolism; protoporphyrin-IX biosynthesis; coproporphyrinogen-III from 5-aminolevulinate: step 4/4. In terms of biological role, catalyzes the decarboxylation of four acetate groups of uroporphyrinogen-III to yield coproporphyrinogen-III. This Geotalea daltonii (strain DSM 22248 / JCM 15807 / FRC-32) (Geobacter daltonii) protein is Uroporphyrinogen decarboxylase.